The following is a 148-amino-acid chain: Aspartate carbamoyltransferase regulatory chain (148 aa).

Zn(2+) is bound by residues cysteine 106, cysteine 111, cysteine 134, and cysteine 137.

Belongs to the PyrI family. As to quaternary structure, contains catalytic and regulatory chains. Zn(2+) is required as a cofactor.

Involved in allosteric regulation of aspartate carbamoyltransferase. The chain is Aspartate carbamoyltransferase regulatory chain from Methanococcus vannielii (strain ATCC 35089 / DSM 1224 / JCM 13029 / OCM 148 / SB).